We begin with the raw amino-acid sequence, 216 residues long: CASP-like protein 2U1 (216 aa).

The interval 1–30 (MKQDTEMGEATNGYIGTPGTVPVSHAGNDS) is disordered. Residues 1-37 (MKQDTEMGEATNGYIGTPGTVPVSHAGNDSGMRRMRT) lie on the Cytoplasmic side of the membrane. Residues 38-58 (ASILMRLTAMALCVTALVTMV) form a helical membrane-spanning segment. Residues 59 to 86 (TDKQTHYFNFASTTIVKTAEYTNVLALK) lie on the Extracellular side of the membrane. The helical transmembrane segment at 87 to 107 (VFVYTNGVIAGYSLLQALWTI) threads the bilayer. At 108 to 128 (VAKSSYSTSKARLWTTFFLDQ) the chain is on the cytoplasmic side. The helical transmembrane segment at 129–148 (FIVYVLIGVTGAATEVAYIA) threads the bilayer. The Extracellular portion of the chain corresponds to 149–170 (EKGESDVAWPKQCNNFGRFCSQ). Residues 171-191 (VGASVIVCFVAILTLVFLAVL) form a helical membrane-spanning segment. Residues 192 to 216 (SAKQLFIHERPSRTTRKDGYYTSNQ) are Cytoplasmic-facing.

Belongs to the Casparian strip membrane proteins (CASP) family. Homodimer and heterodimers.

Its subcellular location is the cell membrane. This chain is CASP-like protein 2U1, found in Marchantia polymorpha (Common liverwort).